A 209-amino-acid chain; its full sequence is Nascent polypeptide-associated complex subunit alpha-like protein 5 (209 aa).

The interval 23 to 71 (EKEDDVVVEDVKDGEEEDDDEDDEDVEVEGEGGNENAKQSRSEKKSRKA) is disordered. Over residues 25–54 (EDDVVVEDVKDGEEEDDDEDDEDVEVEGEG) the composition is skewed to acidic residues. In terms of domain architecture, NAC-A/B spans 62 to 127 (SRSEKKSRKA…AKVDDLSSQL (66 aa)). Positions 170-207 (VEARDIDLVMTQAGVSKAKAVSALKANDGDIVSAIMEL) constitute a UBA domain.

This sequence belongs to the NAC-alpha family.

Its function is as follows. May promote appropriate targeting of ribosome-nascent polypeptide complexes. The protein is Nascent polypeptide-associated complex subunit alpha-like protein 5 of Arabidopsis thaliana (Mouse-ear cress).